We begin with the raw amino-acid sequence, 370 residues long: tRNA-specific 2-thiouridylase MnmA (370 aa).

ATP-binding positions include 9–16 and Met-35; that span reads GLSGGVDS. The interval 95–97 is interaction with target base in tRNA; it reads NPD. Cys-100 acts as the Nucleophile in catalysis. Cys-100 and Cys-198 are oxidised to a cystine. Gly-124 serves as a coordination point for ATP. Residues 148-150 are interaction with tRNA; the sequence is KDQ. The active-site Cysteine persulfide intermediate is the Cys-198. Residues 316-317 form an interaction with tRNA region; sequence RY.

The protein belongs to the MnmA/TRMU family.

It localises to the cytoplasm. It carries out the reaction S-sulfanyl-L-cysteinyl-[protein] + uridine(34) in tRNA + AH2 + ATP = 2-thiouridine(34) in tRNA + L-cysteinyl-[protein] + A + AMP + diphosphate + H(+). Catalyzes the 2-thiolation of uridine at the wobble position (U34) of tRNA, leading to the formation of s(2)U34. The sequence is that of tRNA-specific 2-thiouridylase MnmA from Acidovorax ebreus (strain TPSY) (Diaphorobacter sp. (strain TPSY)).